Reading from the N-terminus, the 736-residue chain is Gingipain R2 (736 aa).

Residues methionine 1–alanine 24 form the signal peptide. A propeptide spanning residues glutamine 25 to arginine 229 is cleaved from the precursor. The Ca(2+) site is built by aspartate 307, valine 329, aspartate 332, tyrosine 334, glutamate 336, glutamate 390, and histidine 395. The Proton donor role is filled by histidine 440. Residue cysteine 473 is the Nucleophile of the active site. Positions 478, 487, 521, 522, 525, 531, 613, and 639 each coordinate Ca(2+).

This sequence belongs to the peptidase C25 family.

It localises to the secreted. It carries out the reaction Hydrolysis of proteins and small molecule substrates, with a preference for Arg in P1.. Thiol protease. Acts synergistically with RgpA to catalyze the maturation of fimbrial subunits, such as FimA. Its proteolytic activity is a major factor in both periodontal tissue destruction and in evasion of host defense mechanisms. This Porphyromonas gingivalis (strain ATCC 33277 / DSM 20709 / CIP 103683 / JCM 12257 / NCTC 11834 / 2561) protein is Gingipain R2.